A 788-amino-acid chain; its full sequence is LPS-assembly protein LptD (788 aa).

An N-terminal signal peptide occupies residues 1–24 (MKKRFPTLLATLIWTALYSQHTLA).

This sequence belongs to the LptD family. In terms of assembly, component of the lipopolysaccharide transport and assembly complex. Interacts with LptE and LptA.

It localises to the cell outer membrane. Its function is as follows. Together with LptE, is involved in the assembly of lipopolysaccharide (LPS) at the surface of the outer membrane. This Yersinia enterocolitica serotype O:8 / biotype 1B (strain NCTC 13174 / 8081) protein is LPS-assembly protein LptD.